Reading from the N-terminus, the 130-residue chain is S-protein homolog 30 (130 aa).

N-linked (GlcNAc...) asparagine glycosylation is found at Asn64 and Asn77.

It belongs to the plant self-incompatibility (S1) protein family.

It is found in the secreted. This Arabidopsis thaliana (Mouse-ear cress) protein is S-protein homolog 30.